A 34-amino-acid polypeptide reads, in one-letter code: RQRRRRIKARRRIKRWRRRRIERRRWIEHATADR.

The sequence is that of Unknown protein 5 from Pseudotsuga menziesii (Douglas-fir).